The chain runs to 191 residues: FMN-dependent NADH:quinone oxidoreductase 1 (191 aa).

Residues serine 10 and 16–18 (SVS) each bind FMN.

The protein belongs to the azoreductase type 1 family. Homodimer. Requires FMN as cofactor.

It catalyses the reaction 2 a quinone + NADH + H(+) = 2 a 1,4-benzosemiquinone + NAD(+). The enzyme catalyses N,N-dimethyl-1,4-phenylenediamine + anthranilate + 2 NAD(+) = 2-(4-dimethylaminophenyl)diazenylbenzoate + 2 NADH + 2 H(+). Its function is as follows. Quinone reductase that provides resistance to thiol-specific stress caused by electrophilic quinones. Also exhibits azoreductase activity. Catalyzes the reductive cleavage of the azo bond in aromatic azo compounds to the corresponding amines. This Jannaschia sp. (strain CCS1) protein is FMN-dependent NADH:quinone oxidoreductase 1.